A 368-amino-acid polypeptide reads, in one-letter code: DNA replication and repair protein RecF (368 aa).

ATP is bound at residue 30 to 37 (GDNGAGKT).

It belongs to the RecF family.

It is found in the cytoplasm. In terms of biological role, the RecF protein is involved in DNA metabolism; it is required for DNA replication and normal SOS inducibility. RecF binds preferentially to single-stranded, linear DNA. It also seems to bind ATP. The polypeptide is DNA replication and repair protein RecF (Xanthomonas campestris pv. campestris (strain 8004)).